Here is a 294-residue protein sequence, read N- to C-terminus: Putative glucose-6-phosphate 1-epimerase (294 aa).

Residues Arg-74 and Arg-99 each coordinate substrate. His-164 is an active-site residue. Residue Asp-208 participates in substrate binding. Glu-267 is an active-site residue.

This sequence belongs to the glucose-6-phosphate 1-epimerase family. In terms of assembly, monomer in solution.

The catalysed reaction is alpha-D-glucose 6-phosphate = beta-D-glucose 6-phosphate. Its function is as follows. Probably functions as a hexose-6-phosphate 1-epimerase. This chain is Putative glucose-6-phosphate 1-epimerase, found in Salmonella typhimurium (strain LT2 / SGSC1412 / ATCC 700720).